A 360-amino-acid chain; its full sequence is Phospho-N-acetylmuramoyl-pentapeptide-transferase (360 aa).

A run of 10 helical transmembrane segments spans residues 18-38 (VFSYLTLRAILGILTALMMSL), 73-93 (TMGGLLILAAIFTSTLLWADL), 97-117 (YVWATLFVIGSLGVVGFVDDY), 135-155 (FWQSVIALVVACALFFTSTQA), 168-188 (VLPQLGLFYIVITYFALVGTS), 199-219 (GLAIVPTILVAAALAIIAYLT), 236-256 (ASELVVVCTAIVGAGLGFLWF), 263-283 (VFMGDVGSLALGGALGIIAVL), 288-308 (LLLIIMGGVFVMEALSVILQV), and 339-359 (IVRFWIISIVLVLAGLATLKI).

It belongs to the glycosyltransferase 4 family. MraY subfamily. Mg(2+) is required as a cofactor.

It localises to the cell inner membrane. It carries out the reaction UDP-N-acetyl-alpha-D-muramoyl-L-alanyl-gamma-D-glutamyl-meso-2,6-diaminopimeloyl-D-alanyl-D-alanine + di-trans,octa-cis-undecaprenyl phosphate = di-trans,octa-cis-undecaprenyl diphospho-N-acetyl-alpha-D-muramoyl-L-alanyl-D-glutamyl-meso-2,6-diaminopimeloyl-D-alanyl-D-alanine + UMP. The protein operates within cell wall biogenesis; peptidoglycan biosynthesis. Catalyzes the initial step of the lipid cycle reactions in the biosynthesis of the cell wall peptidoglycan: transfers peptidoglycan precursor phospho-MurNAc-pentapeptide from UDP-MurNAc-pentapeptide onto the lipid carrier undecaprenyl phosphate, yielding undecaprenyl-pyrophosphoryl-MurNAc-pentapeptide, known as lipid I. The chain is Phospho-N-acetylmuramoyl-pentapeptide-transferase from Pseudoalteromonas translucida (strain TAC 125).